The chain runs to 39 residues: Cytochrome b6-f complex subunit 5 (39 aa).

Residues 5 to 25 (LLCGIVLGLVPITIVGLFVSA) form a helical membrane-spanning segment.

This sequence belongs to the PetG family. In terms of assembly, the 4 large subunits of the cytochrome b6-f complex are cytochrome b6, subunit IV (17 kDa polypeptide, PetD), cytochrome f and the Rieske protein, while the 4 small subunits are PetG, PetL, PetM and PetN. The complex functions as a dimer.

It localises to the cellular thylakoid membrane. In terms of biological role, component of the cytochrome b6-f complex, which mediates electron transfer between photosystem II (PSII) and photosystem I (PSI), cyclic electron flow around PSI, and state transitions. PetG is required for either the stability or assembly of the cytochrome b6-f complex. This chain is Cytochrome b6-f complex subunit 5, found in Prochlorococcus marinus (strain MIT 9211).